A 536-amino-acid chain; its full sequence is Phosphoenolpyruvate carboxykinase (ATP) (536 aa).

Residues arginine 62, tyrosine 203, and lysine 209 each contribute to the substrate site. Residues lysine 209, histidine 228, and 244 to 252 (GLSGTGKTT) each bind ATP. Residues lysine 209 and histidine 228 each coordinate Mn(2+). A Mn(2+)-binding site is contributed by aspartate 265. Residues glutamate 293, arginine 329, 445-446 (RI), and threonine 451 each bind ATP. Substrate is bound at residue arginine 329.

Belongs to the phosphoenolpyruvate carboxykinase (ATP) family. In terms of assembly, monomer. The cofactor is Mn(2+).

Its subcellular location is the cytoplasm. It carries out the reaction oxaloacetate + ATP = phosphoenolpyruvate + ADP + CO2. The protein operates within carbohydrate biosynthesis; gluconeogenesis. Functionally, involved in the gluconeogenesis. Catalyzes the conversion of oxaloacetate (OAA) to phosphoenolpyruvate (PEP) through direct phosphoryl transfer between the nucleoside triphosphate and OAA. The sequence is that of Phosphoenolpyruvate carboxykinase (ATP) from Glaesserella parasuis serovar 5 (strain SH0165) (Haemophilus parasuis).